Here is a 109-residue protein sequence, read N- to C-terminus: FK506-binding protein (109 aa).

In terms of domain architecture, PPIase FKBP-type spans 20 to 108; the sequence is GKEITVHYTG…IFEVELLKVY (89 aa).

This sequence belongs to the FKBP-type PPIase family.

The enzyme catalyses [protein]-peptidylproline (omega=180) = [protein]-peptidylproline (omega=0). With respect to regulation, inhibited by FK506. PPIases accelerate the folding of proteins. This chain is FK506-binding protein (fbp), found in Neisseria meningitidis serogroup B (strain ATCC BAA-335 / MC58).